A 638-amino-acid chain; its full sequence is Growth hormone receptor (638 aa).

Residues 1–18 (MDLWQLLLTVALAGSSDA) form the signal peptide. Topologically, residues 19–264 (FSGSEATPAT…SPFTCEEDFR (246 aa)) are extracellular. The disordered stretch occupies residues 30–51 (GRASESVQRVHPGLGTNSSGKP). N-linked (GlcNAc...) asparagine glycosylation is present at asparagine 46. 2 disulfide bridges follow: cysteine 56-cysteine 66 and cysteine 101-cysteine 112. Residue asparagine 115 is glycosylated (N-linked (GlcNAc...) asparagine). Cysteine 126 and cysteine 140 are disulfide-bonded. The region spanning 151–254 (PPIGLNWTLL…EVLYVTLPQM (104 aa)) is the Fibronectin type-III domain. Asparagine 156, asparagine 161, and asparagine 200 each carry an N-linked (GlcNAc...) asparagine glycan. The WSXWS motif motif lies at 240-244 (YGEFS). A required for ADAM17-mediated proteolysis region spans residues 260-262 (EED). The helical transmembrane segment at 265-288 (FPWFLIIIFGIFGLTVMLFVFIFS) threads the bilayer. At 289 to 638 (KQQRIKMLIL…STDQLNKILP (350 aa)) the chain is on the cytoplasmic side. The required for JAK2 binding stretch occupies residues 294 to 379 (KMLILPPVPV…HQKSLSVLAA (86 aa)). A Box 1 motif motif is present at residues 297–305 (ILPPVPVPK). Positions 340–349 (DSWVEFIELD) match the UbE motif motif. Serine 341 is modified (phosphoserine). Tyrosine 487 is modified (phosphotyrosine). The interval 573-592 (TTTAERSGTAEDAPGSEMPV) is disordered. Position 595 is a phosphotyrosine (tyrosine 595).

The protein belongs to the type I cytokine receptor family. Type 1 subfamily. In terms of assembly, on growth hormone (GH) binding, forms homodimers and binds JAK2 via a box 1-containing domain. In terms of processing, the soluble form (GHBP) is produced by phorbol ester-promoted proteolytic cleavage at the cell surface (shedding) by ADAM17/TACE. Shedding is inhibited by growth hormone (GH) binding to the receptor probably due to a conformational change in GHR rendering the receptor inaccessible to ADAM17. Post-translationally, on GH binding, phosphorylated on tyrosine residues in the cytoplasmic domain by JAK2. Ubiquitinated by the ECS(SOCS2) complex following ligand-binding and phosphorylation by JAK2, leading to its degradation by the proteasome. Regulation by the ECS(SOCS2) complex acts as a negative feedback loop of growth hormone receptor signaling. Ubiquitination is not sufficient for GHR internalization.

The protein localises to the cell membrane. Its subcellular location is the secreted. Receptor for pituitary gland growth hormone involved in regulating postnatal body growth. On ligand binding, couples to, and activates the JAK2/STAT5 pathway. Functionally, the soluble form acts as a reservoir of growth hormone in plasma and may be a modulator/inhibitor of GH signaling. The sequence is that of Growth hormone receptor from Oryctolagus cuniculus (Rabbit).